The following is an 812-amino-acid chain: E3 UFM1-protein ligase 1 homolog (812 aa).

The segment at Ile389 to Phe495 is disordered. Composition is skewed to basic and acidic residues over residues Ser403–Gly415 and Asp475–Asn491.

Belongs to the UFL1 family.

Its function is as follows. E3 UFM1-protein ligase that mediates ufmylation of target proteins. This Oryza sativa subsp. indica (Rice) protein is E3 UFM1-protein ligase 1 homolog.